The primary structure comprises 300 residues: Acetaldehyde dehydrogenase (300 aa).

11–14 (SGNI) contributes to the NAD(+) binding site. The Acyl-thioester intermediate role is filled by Cys-129. NAD(+) contacts are provided by residues 160-168 (SVGPGTRQN) and Asn-271.

The protein belongs to the acetaldehyde dehydrogenase family.

It carries out the reaction acetaldehyde + NAD(+) + CoA = acetyl-CoA + NADH + H(+). The polypeptide is Acetaldehyde dehydrogenase (mhpF) (Pseudoalteromonas translucida (strain TAC 125)).